Reading from the N-terminus, the 206-residue chain is uncharacterized protein (206 aa).

A helical membrane pass occupies residues 166–186; sequence FYTGLSVIVGGATALALGLFF.

Its subcellular location is the membrane. This is an uncharacterized protein from Dictyostelium discoideum (Social amoeba).